Consider the following 517-residue polypeptide: Bifunctional purine biosynthesis protein PurH (517 aa).

In terms of domain architecture, MGS-like spans 1–146 (MAPIALLSVS…KNHAHVAVLT (146 aa)).

Belongs to the PurH family.

It carries out the reaction (6R)-10-formyltetrahydrofolate + 5-amino-1-(5-phospho-beta-D-ribosyl)imidazole-4-carboxamide = 5-formamido-1-(5-phospho-D-ribosyl)imidazole-4-carboxamide + (6S)-5,6,7,8-tetrahydrofolate. The catalysed reaction is IMP + H2O = 5-formamido-1-(5-phospho-D-ribosyl)imidazole-4-carboxamide. It participates in purine metabolism; IMP biosynthesis via de novo pathway; 5-formamido-1-(5-phospho-D-ribosyl)imidazole-4-carboxamide from 5-amino-1-(5-phospho-D-ribosyl)imidazole-4-carboxamide (10-formyl THF route): step 1/1. It functions in the pathway purine metabolism; IMP biosynthesis via de novo pathway; IMP from 5-formamido-1-(5-phospho-D-ribosyl)imidazole-4-carboxamide: step 1/1. This Prochlorococcus marinus (strain MIT 9303) protein is Bifunctional purine biosynthesis protein PurH.